Reading from the N-terminus, the 697-residue chain is Pentatricopeptide repeat-containing protein 1, mitochondrial (697 aa).

Residues 1–36 constitute a mitochondrion transit peptide; sequence MLKRAHYVALHVTLNHNGLSYQRVFSCLTQFPMLRH. PPR repeat units lie at residues 257 to 288 and 294 to 328; these read RPFT…VKNK and SDVF…NVNF.

It localises to the mitochondrion. Its function is as follows. Mitochondrial RNA-binding protein required for the stability of the cox2 and cox3 mRNAs. This is Pentatricopeptide repeat-containing protein 1, mitochondrial (ppr1) from Schizosaccharomyces pombe (strain 972 / ATCC 24843) (Fission yeast).